The primary structure comprises 259 residues: Dihydroorotate dehydrogenase B (NAD(+)), electron transfer subunit (259 aa).

Positions 2 to 102 (MQKQNMIVVN…LGPLGHGFPV (101 aa)) constitute an FAD-binding FR-type domain. Residues 53 to 56 (RPIS), 70 to 72 (LYR), and 77 to 78 (GT) contribute to the FAD site. The [2Fe-2S] cluster site is built by Cys-221, Cys-226, Cys-229, and Cys-246.

Belongs to the PyrK family. In terms of assembly, heterotetramer of 2 PyrK and 2 PyrD type B subunits. Requires [2Fe-2S] cluster as cofactor. FAD is required as a cofactor.

The protein operates within pyrimidine metabolism; UMP biosynthesis via de novo pathway; orotate from (S)-dihydroorotate (NAD(+) route): step 1/1. Its function is as follows. Responsible for channeling the electrons from the oxidation of dihydroorotate from the FMN redox center in the PyrD type B subunit to the ultimate electron acceptor NAD(+). The chain is Dihydroorotate dehydrogenase B (NAD(+)), electron transfer subunit from Bacillus cereus (strain 03BB102).